The sequence spans 489 residues: Rhamnulokinase (489 aa).

Position 13–17 (13–17) interacts with ATP; that stretch reads ASSGR. Cys-68 and Cys-222 are joined by a disulfide. Substrate-binding positions include Gly-83 and 236–238; that span reads HDT. The active-site Proton acceptor is the Asp-237. Residue Thr-259 coordinates ATP. Asn-296 serves as a coordination point for substrate. Gln-304 is an ATP binding site. Residues Cys-353 and Cys-370 are joined by a disulfide bond. Gly-402 is a binding site for ATP. An intrachain disulfide couples Cys-413 to Cys-417.

This sequence belongs to the rhamnulokinase family. Requires Mg(2+) as cofactor.

The enzyme catalyses L-rhamnulose + ATP = L-rhamnulose 1-phosphate + ADP + H(+). It participates in carbohydrate degradation; L-rhamnose degradation; glycerone phosphate from L-rhamnose: step 2/3. In terms of biological role, involved in the catabolism of L-rhamnose (6-deoxy-L-mannose). Catalyzes the transfer of the gamma-phosphate group from ATP to the 1-hydroxyl group of L-rhamnulose to yield L-rhamnulose 1-phosphate. The protein is Rhamnulokinase of Salmonella schwarzengrund (strain CVM19633).